A 365-amino-acid polypeptide reads, in one-letter code: Ubiquitin carboxyl-terminal hydrolase 4 (365 aa).

G2 is lipidated: N-myristoyl glycine. The region spanning 23 to 362 (FGFENFGNTC…HGYILLYESL (340 aa)) is the USP domain. The active-site Nucleophile is the C32. The Bipartite nuclear localization signal motif lies at 81–98 (KKKTGVIAPKRFVQRLKK). H310 acts as the Proton acceptor in catalysis.

Belongs to the peptidase C19 family. As to expression, constitutively and ubiquitously expressed.

The protein localises to the nucleus. It carries out the reaction Thiol-dependent hydrolysis of ester, thioester, amide, peptide and isopeptide bonds formed by the C-terminal Gly of ubiquitin (a 76-residue protein attached to proteins as an intracellular targeting signal).. Functionally, recognizes and hydrolyzes the peptide bond at the C-terminal Gly of ubiquitin. Involved in the processing of poly-ubiquitin precursors as well as that of ubiquitinated proteins. Required for the correct development of pollen. In Arabidopsis thaliana (Mouse-ear cress), this protein is Ubiquitin carboxyl-terminal hydrolase 4 (UBP4).